A 550-amino-acid polypeptide reads, in one-letter code: Glucose-6-phosphate isomerase (550 aa).

The active-site Proton donor is Glu-357. Catalysis depends on residues His-389 and Lys-509.

The protein belongs to the GPI family.

It localises to the cytoplasm. It carries out the reaction alpha-D-glucose 6-phosphate = beta-D-fructose 6-phosphate. The protein operates within carbohydrate biosynthesis; gluconeogenesis. It participates in carbohydrate degradation; glycolysis; D-glyceraldehyde 3-phosphate and glycerone phosphate from D-glucose: step 2/4. In terms of biological role, catalyzes the reversible isomerization of glucose-6-phosphate to fructose-6-phosphate. The chain is Glucose-6-phosphate isomerase from Anaeromyxobacter dehalogenans (strain 2CP-C).